A 342-amino-acid chain; its full sequence is Heat-inducible transcription repressor HrcA (342 aa).

It belongs to the HrcA family.

In terms of biological role, negative regulator of class I heat shock genes (grpE-dnaK-dnaJ and groELS operons). Prevents heat-shock induction of these operons. The polypeptide is Heat-inducible transcription repressor HrcA (Onion yellows phytoplasma (strain OY-M)).